The primary structure comprises 335 residues: UPF0353 protein MMAR_2288 (335 aa).

The next 2 helical transmembrane spans lie at 18–38 and 67–87; these read WFFL…VLQL and IPAM…AGPT. Positions 98–294 constitute a VWFA domain; it reads VVMLVIDVSQ…AELNSVYASL (197 aa). A helical membrane pass occupies residues 309–329; the sequence is MGWLRLGALVLVAAALAALLI.

It belongs to the UPF0353 family.

The protein localises to the cell membrane. In Mycobacterium marinum (strain ATCC BAA-535 / M), this protein is UPF0353 protein MMAR_2288.